The following is a 182-amino-acid chain: ATP-dependent protease subunit HslV (182 aa).

Residue Thr-10 is part of the active site. Na(+) contacts are provided by Ala-166, Cys-169, and Ser-172.

Belongs to the peptidase T1B family. HslV subfamily. In terms of assembly, a double ring-shaped homohexamer of HslV is capped on each side by a ring-shaped HslU homohexamer. The assembly of the HslU/HslV complex is dependent on binding of ATP.

It localises to the cytoplasm. The enzyme catalyses ATP-dependent cleavage of peptide bonds with broad specificity.. With respect to regulation, allosterically activated by HslU binding. Its function is as follows. Protease subunit of a proteasome-like degradation complex believed to be a general protein degrading machinery. The protein is ATP-dependent protease subunit HslV of Rickettsia bellii (strain OSU 85-389).